The following is a 138-amino-acid chain: Regulator of ribonuclease activity B (138 aa).

The tract at residues 111 to 138 is disordered; sequence WGTYFEDPNGEEGDDDDYVDEDDDGVRH. Acidic residues predominate over residues 118 to 138; it reads PNGEEGDDDDYVDEDDDGVRH.

It belongs to the RraB family. In terms of assembly, interacts with the C-terminal region of Rne.

Its subcellular location is the cytoplasm. Globally modulates RNA abundance by binding to RNase E (Rne) and regulating its endonucleolytic activity. Can modulate Rne action in a substrate-dependent manner by altering the composition of the degradosome. The sequence is that of Regulator of ribonuclease activity B from Salmonella typhi.